Reading from the N-terminus, the 150-residue chain is Catabolic 3-dehydroquinase 2 (150 aa).

Tyr-23 serves as the catalytic Proton acceptor. Substrate is bound by residues Asn-74, His-80, and Asp-87. The active-site Proton donor is His-100. Substrate is bound by residues 101–102 (IT) and Arg-111.

This sequence belongs to the type-II 3-dehydroquinase family. Homododecamer. Adopts a ring-like structure, composed of an arrangement of two hexameric rings stacked on top of one another.

The enzyme catalyses 3-dehydroquinate = 3-dehydroshikimate + H2O. It participates in aromatic compound metabolism; 3,4-dihydroxybenzoate biosynthesis; 3,4-dihydroxybenzoate from 3-dehydroquinate: step 1/2. In terms of biological role, is involved in the catabolism of quinate. Allows the utilization of quinate as carbon source via the beta-ketoadipate pathway. The sequence is that of Catabolic 3-dehydroquinase 2 from Aspergillus flavus (strain ATCC 200026 / FGSC A1120 / IAM 13836 / NRRL 3357 / JCM 12722 / SRRC 167).